A 376-amino-acid chain; its full sequence is Chaperone protein DnaJ (376 aa).

A J domain is found at 5–70 (DYYEVLGVAR…EKRARYDRFG (66 aa)). The CR-type zinc-finger motif lies at 137 to 215 (GDEVTLRLPK…CKGSGQTQQV (79 aa)). 8 residues coordinate Zn(2+): Cys-150, Cys-153, Cys-167, Cys-170, Cys-189, Cys-192, Cys-203, and Cys-206. 4 CXXCXGXG motif repeats span residues 150-157 (CDECGGSG), 167-174 (CRHCGGAG), 189-196 (CPVCRGEG), and 203-210 (CPKCKGSG).

This sequence belongs to the DnaJ family. In terms of assembly, homodimer. Requires Zn(2+) as cofactor.

Its subcellular location is the cytoplasm. Participates actively in the response to hyperosmotic and heat shock by preventing the aggregation of stress-denatured proteins and by disaggregating proteins, also in an autonomous, DnaK-independent fashion. Unfolded proteins bind initially to DnaJ; upon interaction with the DnaJ-bound protein, DnaK hydrolyzes its bound ATP, resulting in the formation of a stable complex. GrpE releases ADP from DnaK; ATP binding to DnaK triggers the release of the substrate protein, thus completing the reaction cycle. Several rounds of ATP-dependent interactions between DnaJ, DnaK and GrpE are required for fully efficient folding. Also involved, together with DnaK and GrpE, in the DNA replication of plasmids through activation of initiation proteins. This chain is Chaperone protein DnaJ, found in Nitratidesulfovibrio vulgaris (strain ATCC 29579 / DSM 644 / CCUG 34227 / NCIMB 8303 / VKM B-1760 / Hildenborough) (Desulfovibrio vulgaris).